A 482-amino-acid polypeptide reads, in one-letter code: G2/mitotic-specific cyclin cdc13 (482 aa).

3 stretches are compositionally biased toward polar residues: residues 35–55 (LHSS…STNV), 78–92 (SKNT…SVST), and 118–140 (SVFN…SVST). Positions 35–140 (LHSSENSLVN…LSTKSHSVST (106 aa)) are disordered. Residues 206-332 (DIFEYLNELE…ILRVLEFNLA (127 aa)) enclose the Cyclin N-terminal domain.

It belongs to the cyclin family. Cyclin AB subfamily. As to quaternary structure, interacts with cdc2. Interacts with rum1. Associates with microtubules. Also interacts with cdc11.

Its subcellular location is the nucleus. It localises to the cytoplasm. The protein localises to the cytoskeleton. The protein resides in the microtubule organizing center. It is found in the spindle pole body. Essential for the control of the cell cycle at the G2/M (mitosis) transition. Interacts with the cdc2 protein kinase to form MPF. G2/M cyclins accumulate steadily during G2 and are abruptly destroyed at mitosis. Involved in the reorganization of the cytoskeleton on transition from G2 to mitosis. Association with rum1 promotes its proteolysis during G1. Also essential for initiation of meiosis II. This is G2/mitotic-specific cyclin cdc13 from Schizosaccharomyces pombe (strain 972 / ATCC 24843) (Fission yeast).